The following is a 314-amino-acid chain: tRNA-cytidine(32) 2-sulfurtransferase (314 aa).

Positions 58–63 match the PP-loop motif motif; sequence SGGKDS. Cys133, Cys136, and Cys224 together coordinate [4Fe-4S] cluster.

Belongs to the TtcA family. Homodimer. Mg(2+) is required as a cofactor. The cofactor is [4Fe-4S] cluster.

It localises to the cytoplasm. It catalyses the reaction cytidine(32) in tRNA + S-sulfanyl-L-cysteinyl-[cysteine desulfurase] + AH2 + ATP = 2-thiocytidine(32) in tRNA + L-cysteinyl-[cysteine desulfurase] + A + AMP + diphosphate + H(+). Its pathway is tRNA modification. Its function is as follows. Catalyzes the ATP-dependent 2-thiolation of cytidine in position 32 of tRNA, to form 2-thiocytidine (s(2)C32). The sulfur atoms are provided by the cysteine/cysteine desulfurase (IscS) system. The chain is tRNA-cytidine(32) 2-sulfurtransferase from Polaromonas naphthalenivorans (strain CJ2).